The following is a 435-amino-acid chain: Zinc finger and BTB domain-containing protein 25 (435 aa).

The BTB domain occupies 1–107; the sequence is MDTASHSLVL…GIRFLHADYL (107 aa). Glycyl lysine isopeptide (Lys-Gly) (interchain with G-Cter in SUMO2) cross-links involve residues lysine 142, lysine 148, lysine 198, and lysine 204. The segment at 238–260 adopts a C2H2-type 1 zinc-finger fold; sequence HLCHYCGERFDSRSNLRQHLHTH. Residues lysine 303 and lysine 330 each participate in a glycyl lysine isopeptide (Lys-Gly) (interchain with G-Cter in SUMO2) cross-link. Residues 349-371 form a C2H2-type 2 zinc finger; that stretch reads MSCTICGHKFPRKSQLLEHMYTH. A Glycyl lysine isopeptide (Lys-Gly) (interchain with G-Cter in SUMO2) cross-link involves residue lysine 405.

In terms of tissue distribution, expressed mainly in hematopoietic cells and testis.

The protein localises to the nucleus. May be involved in transcriptional regulation. This chain is Zinc finger and BTB domain-containing protein 25 (ZBTB25), found in Homo sapiens (Human).